The following is a 467-amino-acid chain: ATP-dependent protease ATPase subunit HslU (467 aa).

ATP-binding positions include Val22 and 64–69 (GVGKTE). Residues 149-192 (QTNNPLESLFGGAIPNFGQNNEDEEEPPTEEIKTKRSEIKRQLE) are disordered. A compositionally biased stretch (basic and acidic residues) spans 178-192 (EEIKTKRSEIKRQLE). ATP-binding residues include Asp280, Glu345, and Arg417.

The protein belongs to the ClpX chaperone family. HslU subfamily. A double ring-shaped homohexamer of HslV is capped on each side by a ring-shaped HslU homohexamer. The assembly of the HslU/HslV complex is dependent on binding of ATP.

The protein resides in the cytoplasm. Its function is as follows. ATPase subunit of a proteasome-like degradation complex; this subunit has chaperone activity. The binding of ATP and its subsequent hydrolysis by HslU are essential for unfolding of protein substrates subsequently hydrolyzed by HslV. HslU recognizes the N-terminal part of its protein substrates and unfolds these before they are guided to HslV for hydrolysis. The chain is ATP-dependent protease ATPase subunit HslU from Staphylococcus aureus (strain Mu3 / ATCC 700698).